The following is a 993-amino-acid chain: Serine/threonine-protein phosphatase 6 regulatory ankyrin repeat subunit B (993 aa).

ANK repeat units follow at residues 7-36, 40-69, 73-102, 106-135, 139-168, 172-201, 205-234, 238-267, 271-301, 305-334, 338-367, 371-400, 404-433, 437-466, 470-498, 531-561, 566-595, 599-628, 633-662, 669-698, 702-731, 735-764, 771-800, 803-832, 838-867, 871-901, 905-934, and 941-970; these read TDQP…DVNT, EKRT…RVNA, MWLT…DVNA, NWQT…SVNV, GGRT…NINA, KDRR…EVTC, KGYT…EIDE, YGNT…NVNQ, NGFT…DVNI, DGKS…EIDC, DGNT…DTAK, HSMF…EIDT, FGRT…DFHK, CGRT…NVNE, WGRT…DNSE, EGYN…GFEE, ATKS…DLDI, KGRT…SIFV, TKRT…NPEA, KGQT…NVDT, LGCT…SILC, RGRT…SEED, QGYT…FRKF, NPFT…SSIV, KGRT…PVNA, SGKT…DLTV, DLNT…DESL, and ALQT…CVLA.

Protein phosphatase 6 (PP6) holoenzyme is proposed to be a heterotrimeric complex formed by the catalytic subunit, a SAPS domain-containing subunit (PP6R) and an ankyrin repeat-domain containing regulatory subunit (ARS). Interacts with PPP6R1.

Functionally, putative regulatory subunit of protein phosphatase 6 (PP6) that may be involved in the recognition of phosphoprotein substrates. The polypeptide is Serine/threonine-protein phosphatase 6 regulatory ankyrin repeat subunit B (ANKRD44) (Homo sapiens (Human)).